The following is a 252-amino-acid chain: Large ribosomal subunit protein uL4 (252 aa).

Belongs to the universal ribosomal protein uL4 family. Part of the 50S ribosomal subunit.

Functionally, one of the primary rRNA binding proteins, this protein initially binds near the 5'-end of the 23S rRNA. It is important during the early stages of 50S assembly. It makes multiple contacts with different domains of the 23S rRNA in the assembled 50S subunit and ribosome. Forms part of the polypeptide exit tunnel. This is Large ribosomal subunit protein uL4 from Methanococcus vannielii (strain ATCC 35089 / DSM 1224 / JCM 13029 / OCM 148 / SB).